The chain runs to 347 residues: Serpentine receptor class beta-2 (347 aa).

A run of 7 helical transmembrane segments spans residues 27–47, 62–82, 108–128, 146–166, 194–214, 246–266, and 288–308; these read IAQL…YIFL, FLLV…AFLF, GNLS…GFSI, FLGP…LYHV, FWEL…FLLV, LIVS…TIFV, and ITVP…LSFM.

Belongs to the nematode receptor-like protein srb family.

It is found in the membrane. The polypeptide is Serpentine receptor class beta-2 (srb-2) (Caenorhabditis elegans).